The chain runs to 530 residues: Cytochrome P450 monooxygenase aneG (530 aa).

N2 is a glycosylation site (N-linked (GlcNAc...) asparagine). The helical transmembrane segment at 43–63 threads the bilayer; that stretch reads WLSILGFTIGCYYVIYTFYAL. A glycan (N-linked (GlcNAc...) asparagine) is linked at N92. Heme is bound at residue C474.

It belongs to the cytochrome P450 family. Heme is required as a cofactor.

The protein resides in the membrane. The catalysed reaction is asperaculane E + reduced [NADPH--hemoprotein reductase] + O2 = asperaculane G + oxidized [NADPH--hemoprotein reductase] + H2O + H(+). It carries out the reaction asperaculane G + reduced [NADPH--hemoprotein reductase] + O2 = aculene D + oxidized [NADPH--hemoprotein reductase] + CO2 + 2 H2O. The enzyme catalyses asperaculane E + 2 reduced [NADPH--hemoprotein reductase] + 2 O2 = aculene D + 2 oxidized [NADPH--hemoprotein reductase] + CO2 + 3 H2O + H(+). It participates in secondary metabolite biosynthesis. Functionally, cytochrome P450 monooxygenase; part of the gene cluster that mediates the biosynthesis of aculenes, a unique type of norsesquiterpenes that contain a nordaucane skeleton linked to an L-proline moiety and are of mixed biosynthetic origin. The pathway begins with the synthesis of dauca-4,7-diene by the terpene cyclase aneC using farnesyl pyrophosphate (FPP) as substrate. The cytochrome P450 monooxygenase aneF then performs the initial oxidation at C-12 of dauca-4,7-diene to yield asperaculane D. Asperaculane D is substrate of the cytochrome P450 monooxygenase aneD for C-10 hydroxylation to yield asperaculane E. The cytochrome P450 monooxygenase aneG then converts asperaculane E into aculene D via C-2 oxidation. The monomodular nonribosomal peptide synthtase aneB adenylates L-proline and the thiohydrolase aneE transfers this activated L-proline derivative to aculenes D and C to produce respectively aculenes B and A. The dioxygenase aneA converts aculene D into aculene C, and aculene B into aculene A by introducing the 5,6-alkene moiety. Asperculanes A, B, C and F, as well as 14-prolyl asperculane C, might be shunt products of the pathway. In Aspergillus aculeatus (strain ATCC 16872 / CBS 172.66 / WB 5094), this protein is Cytochrome P450 monooxygenase aneG.